A 259-amino-acid chain; its full sequence is Protein YIF1B (259 aa).

At methionine 1 the chain carries N-acetylmethionine. Residues 1-61 (MHATGLAAPA…QPSPGSLGYP (61 aa)) are disordered. Topologically, residues 9-153 (PAGTPRLRKW…APRFDINAPD (145 aa)) are cytoplasmic. Phosphothreonine is present on threonine 12. Positions 14–24 (RLRKWPSKRRV) are enriched in basic residues. Serine 64 carries the phosphoserine modification. A helical membrane pass occupies residues 154–174 (LYIPAMAFITYILVAGLALGT). At 175–186 (QDRMIGGVLTGL) the chain is on the extracellular side. The chain crosses the membrane as a helical span at residues 187–207 (LFGKIGYYLVLAWCCVSIFVF). Over 208–237 (MIRTLRLKILAQAAAEGVPVRGARNQLRMY) the chain is Cytoplasmic. The helical transmembrane segment at 238 to 258 (LTMAVAAAQPVLMYWLTFHLV) threads the bilayer. A topological domain (extracellular) is located at residue arginine 259.

It belongs to the YIF1 family. In terms of assembly, interacts with HTR1A (via C-terminus). Interacts with ABCB9 (via TMD0); this interaction allows (but is not essential) the ER-to-Golgi trafficking and strongly depends on a salt bridge within TMD0. As to expression, highly expressed in brain. Expressed in heart, kidney, and lung and lower levels in spleen, muscle, and intestine (at protein level). Expressed in serotoninergic neurons (at protein level).

It is found in the endoplasmic reticulum membrane. It localises to the golgi apparatus membrane. The protein resides in the endoplasmic reticulum-Golgi intermediate compartment membrane. Functions in endoplasmic reticulum to Golgi vesicle-mediated transport and regulates the proper organization of the endoplasmic reticulum and the Golgi. Plays a key role in targeting to neuronal dendrites receptors such as HTR1A. Plays also a role in primary cilium and sperm flagellum assembly probably through protein transport to these compartments. This Rattus norvegicus (Rat) protein is Protein YIF1B.